Reading from the N-terminus, the 587-residue chain is Phosphatidylinositol-3-phosphatase SAC1 (587 aa).

Over 1–520 the chain is Cytoplasmic; that stretch reads MATAAYEQLK…SPLSVPRDWK (520 aa). One can recognise an SAC domain in the interval 122–451; it reads LNHVLNVDGF…ANACAKQYAG (330 aa). Residues 452-587 are essential for phosphatidylinositol-4-phosphate phosphatase activity; it reads TGALKTDFTR…PRLVQKEKID (136 aa). The residue at position 456 (lysine 456) is an N6-acetyllysine. Residues 521–541 traverse the membrane as a helical segment; sequence FLALPIIMVVAFSMCIICLLM. Over 542–548 the chain is Lumenal; sequence AGDTWTE. Residues 549-569 form a helical membrane-spanning segment; sequence TLAYVLFWGVASIGTFFIILY. Residues 570–587 are Cytoplasmic-facing; that stretch reads NGKDFVDAPRLVQKEKID.

In terms of assembly, interacts with TMEM39A. Interacts with SEC23A and SEC24A; this interaction is reduced in the absence of TMEM39A. Interacts with PLEKHA3 and VAPA and/or VAPB to form a ternary complex.

The protein resides in the endoplasmic reticulum membrane. Its subcellular location is the golgi apparatus membrane. The catalysed reaction is a 1,2-diacyl-sn-glycero-3-phospho-(1D-myo-inositol-3-phosphate) + H2O = a 1,2-diacyl-sn-glycero-3-phospho-(1D-myo-inositol) + phosphate. It catalyses the reaction a 1,2-diacyl-sn-glycero-3-phospho-(1D-myo-inositol 4-phosphate) + H2O = a 1,2-diacyl-sn-glycero-3-phospho-(1D-myo-inositol) + phosphate. Its function is as follows. Phosphoinositide phosphatase which catalyzes the hydrolysis of phosphatidylinositol 4-phosphate (PtdIns(4)P), phosphatidylinositol 3-phosphate (PtdIns(3)P) and has low activity towards phosphatidylinositol-3,5-bisphosphate (PtdIns(3,5)P2). Shows a very robust PtdIns(4)P phosphatase activity when it binds PtdIns(4)P in a 'cis' configuration in the cellular environment, with much less activity seen when it binds PtdIns(4)P in 'trans' configuration. PtdIns(4)P phosphatase activity (when it binds PtdIns(4)P in 'trans' configuration) is enhanced in the presence of PLEKHA3. This chain is Phosphatidylinositol-3-phosphatase SAC1 (SACM1L), found in Pongo abelii (Sumatran orangutan).